A 575-amino-acid polypeptide reads, in one-letter code: MNILELSEQEIIRRNSLNELRAMGIEPYPAAEYVTNAFSTDIKAEFKDDETPRQVSVAGRMMSRRIMGKASFIELQDSKGRIQVYITRDDICPGEDKEMYNTVFKRLLDLGDFIGIEGFVFRTQMGEISIHAQKLTVLAKSIKPLPIVKYKDGVTYDSFEDPELRYRQRYVDLAVNEGVKDIFIKRSKVYSSMREYFNSKGYMEVETPILQAIAGGAAARPFMTHHNALDIPLYMRIASELYLKRLIVGGFEGVYEIGKNFRNEGMDRTHNPEFTCMEIYVAYKDYNWMMEFTEKMIEKICLDVNGTTEVKVGDNIINFKAPYKRVTMLGAIKEHTGYDLTGMNEEQIREVCKKLNMEIDDTMGKGKLIDEIFGEFCEGTYIQPTFITDYPIEMSPLTKKHRDNPELTERFELMVNGKELCNAYSELNDPIDQLERFEDQMKLSEKGDDEAMIIDKDFVRALEYGMPPTSGMGIGMDRLTMLMTGQSTIQEVLFFPQMRPEKVVPKDSASKFMELGIAEEWVPVIQKAGYNQVADMKEVNPQKFHQDICGINKKYKLELTNPSVNDVAEWIQKIK.

Positions 412 and 419 each coordinate Mg(2+).

This sequence belongs to the class-II aminoacyl-tRNA synthetase family. As to quaternary structure, homodimer. It depends on Mg(2+) as a cofactor.

It is found in the cytoplasm. It carries out the reaction tRNA(Lys) + L-lysine + ATP = L-lysyl-tRNA(Lys) + AMP + diphosphate. The chain is Lysine--tRNA ligase from Bacteroides fragilis (strain ATCC 25285 / DSM 2151 / CCUG 4856 / JCM 11019 / LMG 10263 / NCTC 9343 / Onslow / VPI 2553 / EN-2).